The chain runs to 276 residues: Undecaprenyl-diphosphatase (276 aa).

8 helical membrane passes run 1 to 21, 41 to 61, 97 to 117, 121 to 141, 155 to 175, 200 to 220, 231 to 251, and 256 to 276; these read MHWL…FLPV, LLLD…VFFA, ALLI…FHKI, LFAS…LLWA, VTWG…LPGI, FLLS…DASA, LGGI…LAIV, and LWWF…ANFV.

It belongs to the UppP family.

It is found in the cell inner membrane. It carries out the reaction di-trans,octa-cis-undecaprenyl diphosphate + H2O = di-trans,octa-cis-undecaprenyl phosphate + phosphate + H(+). Catalyzes the dephosphorylation of undecaprenyl diphosphate (UPP). Confers resistance to bacitracin. In Desulfatibacillum aliphaticivorans, this protein is Undecaprenyl-diphosphatase.